The sequence spans 336 residues: P2Y purinoceptor 13 (336 aa).

The Extracellular portion of the chain corresponds to methionine 1–valine 32. 2 N-linked (GlcNAc...) asparagine glycosylation sites follow: asparagine 6 and asparagine 14. The chain crosses the membrane as a helical span at residues leucine 33–isoleucine 53. Residues histidine 54–threonine 60 are Cytoplasmic-facing. The helical transmembrane segment at phenylalanine 61 to phenylalanine 81 threads the bilayer. Residues lysine 82 to threonine 100 are Extracellular-facing. The cysteines at positions 99 and 176 are disulfide-linked. The helical transmembrane segment at phenylalanine 101–alanine 121 threads the bilayer. Over phenylalanine 122–lysine 144 the chain is Cytoplasmic. Residues isoleucine 145 to asparagine 165 traverse the membrane as a helical segment. Residues lysine 166–histidine 193 lie on the Extracellular side of the membrane. Residues threonine 194–alanine 214 form a helical membrane-spanning segment. The Cytoplasmic portion of the chain corresponds to lysine 215–lysine 237. A helical membrane pass occupies residues valine 238–proline 258. At tyrosine 259 to glutamate 281 the chain is on the extracellular side. Asparagine 266 carries an N-linked (GlcNAc...) asparagine glycan. A helical membrane pass occupies residues serine 282–cysteine 302. Topologically, residues lysine 303–serine 336 are cytoplasmic.

This sequence belongs to the G-protein coupled receptor 1 family. In terms of tissue distribution, highest levels in spleen, liver brain and kidney. Lower but significant level are also detected in intestine, stomach, skeletal muscle, testis, heart and lung.

The protein resides in the cell membrane. In terms of biological role, receptor for ADP. Coupled to G(i)-proteins. May play a role in hematopoiesis and the immune system. This is P2Y purinoceptor 13 (P2ry13) from Rattus norvegicus (Rat).